The chain runs to 567 residues: Eukaryotic translation initiation factor 3 subunit D (567 aa).

Disordered regions lie at residues 12–34 and 122–160; these read PVKS…YAPF and GQNV…RGRR. Residues 128-142 show a composition bias toward gly residues; the sequence is GGRGGRYGSSGGRGA. Positions 300–314 are RNA gate; the sequence is PFDYLTVNENAYDSP.

This sequence belongs to the eIF-3 subunit D family. As to quaternary structure, component of the eukaryotic translation initiation factor 3 (eIF-3) complex. The eIF-3 complex appears to include tif32/eif3a, SPAC25G10.08/eif3b, tif33/eif3c, SPBC4C3.07/eif3f, tif35/eif3g and sum1/eif3i. This set of common subunits may also associate exclusively with either moe1/eif3d and int6/eif3e, or with SPAC821.05/eif3h and SPAC1751.03/eif3m. The eIF-3 complex may also include SPAC3A12.13c/eif3j.

The protein resides in the cytoplasm. In terms of biological role, mRNA cap-binding component of the eukaryotic translation initiation factor 3 (eIF-3) complex, which is involved in protein synthesis of a specialized repertoire of mRNAs and, together with other initiation factors, stimulates binding of mRNA and methionyl-tRNAi to the 40S ribosome. The eIF-3 complex specifically targets and initiates translation of a subset of mRNAs involved in cell proliferation. In the eIF-3 complex, eif3d specifically recognizes and binds the 7-methylguanosine cap of a subset of mRNAs. The sequence is that of Eukaryotic translation initiation factor 3 subunit D (moe1) from Schizosaccharomyces pombe (strain 972 / ATCC 24843) (Fission yeast).